The primary structure comprises 522 residues: Lysophospholipid acyltransferase LPCAT4 (522 aa).

2 helical membrane-spanning segments follow: residues 43–63 (ILGFTLFPLRFLLAAIFLFLM) and 92–112 (HLIYLLSRTMFFMCGFHWITI). Residues 130 to 135 (HSTFFD) carry the HXXXXD motif motif. 2 N-linked (GlcNAc...) asparagine glycosylation sites follow: Asn-166 and Asn-517. Residues 496 to 522 (GRRKPPHIQQNGGCSGKNNPRNQSKMD) form a disordered region. Polar residues predominate over residues 503–522 (IQQNGGCSGKNNPRNQSKMD).

It belongs to the 1-acyl-sn-glycerol-3-phosphate acyltransferase family.

Its subcellular location is the endoplasmic reticulum membrane. It catalyses the reaction a 1-acyl-sn-glycero-3-phosphoethanolamine + an acyl-CoA = a 1,2-diacyl-sn-glycero-3-phosphoethanolamine + CoA. The enzyme catalyses a 1-O-(1Z-alkenyl)-sn-glycero-3-phosphoethanolamine + an acyl-CoA = a 1-O-(1Z-alkenyl)-2-acyl-sn-glycero-3-phosphoethanolamine + CoA. It carries out the reaction a 1-acyl-sn-glycero-3-phosphocholine + an acyl-CoA = a 1,2-diacyl-sn-glycero-3-phosphocholine + CoA. The catalysed reaction is a 1-O-alkyl-sn-glycero-3-phosphocholine + acetyl-CoA = a 1-O-alkyl-2-acetyl-sn-glycero-3-phosphocholine + CoA. It catalyses the reaction a 1-acyl-sn-glycero-3-phospho-L-serine + an acyl-CoA = a 1,2-diacyl-sn-glycero-3-phospho-L-serine + CoA. The protein operates within lipid metabolism; phospholipid metabolism. Displays acyl-CoA-dependent lysophospholipid acyltransferase activity with a subset of lysophospholipids as substrates. Prefers long chain acyl-CoAs (C16, C18) as acyl donors. This chain is Lysophospholipid acyltransferase LPCAT4 (lpcat4), found in Xenopus tropicalis (Western clawed frog).